The primary structure comprises 470 residues: GWYMGTEIGVRDFCDYQRYNILEEVGRRMGLETHKLSSLWKDQALVTINVAVTYSFQKNKVIITDHHSAAESFMKHLETEFPPARRLPADWDWLVPPMSGSLTPIFHQEMVNYILSPFFYYQPDPWMTHVWRNGEMCLKKQQISFKAVARAALFSSTLMSRVLANRVRCTVLYATETGKSQTLAQRLNSMLNCAFNSRLLCMEDYNFSDMEQESLLVVVMSTFGNGGSPGNGESFKKQLFSLQYLRNKSRYCVFGLGSRMYPQFCAFAHAVDAKLEELGAERVTPTGEGDELNGQEEAFSAWALTALKDAYKEFKIQGQLSLQLPGAERFCEAWDPLRHRVAVESCPQDRITALSAIHSKAVLPMKLKSKHNLQSPQSSRSTILVELERERSPEVMDFAPGDHVGVFPGNLPQLVAGILKFLPQTPPTNQCLRLGYRSDTFRVMRKTGRLLDASQHSLCLRHSPTSWTLP.

3 residues coordinate L-arginine: W2, Y3, and E7. Residues R11, W93, and F106 each coordinate (6R)-L-erythro-5,6,7,8-tetrahydrobiopterin. Y121 is a heme b binding site. The interval 145–165 (FKAVARAALFSSTLMSRVLAN) is calmodulin-binding. The region spanning 169–307 (CTVLYATETG…AFSAWALTAL (139 aa)) is the Flavodoxin-like domain. 11 residues coordinate FMN: T175, E176, T177, K179, S180, S221, T222, S258, C265, E291, and Q295. R380 is an NADP(+) binding site. Residue H403 participates in FAD binding. T440 contributes to the NADP(+) binding site.

Belongs to the NOS family. As to quaternary structure, homodimer. Heme b is required as a cofactor. It depends on FAD as a cofactor. The cofactor is FMN. (6R)-L-erythro-5,6,7,8-tetrahydrobiopterin serves as cofactor.

The protein localises to the cytoplasm. The protein resides in the cytosol. The enzyme catalyses 2 L-arginine + 3 NADPH + 4 O2 + H(+) = 2 L-citrulline + 2 nitric oxide + 3 NADP(+) + 4 H2O. With respect to regulation, not stimulated by calcium/calmodulin. In terms of biological role, produces nitric oxide (NO) which is a messenger molecule with diverse functions throughout the body. In macrophages, NO mediates tumoricidal and bactericidal actions. Also has nitrosylase activity and mediates cysteine S-nitrosylation of cytoplasmic target proteins such COX2. The sequence is that of Nitric oxide synthase, inducible (nos2) from Oncorhynchus mykiss (Rainbow trout).